A 421-amino-acid chain; its full sequence is Expansin-like protein DDB_G0293186 (421 aa).

Residues 1 to 20 (MRTLKLIILLILSTFKTINS) form the signal peptide. Asparagine 19 carries an N-linked (GlcNAc...) asparagine glycan. One can recognise an Expansin-like EG45 domain in the interval 43 to 139 (GGQCGLPLPG…QKVSCGFSGY (97 aa)). Intrachain disulfides connect cysteine 46–cysteine 70 and cysteine 73–cysteine 134. N-linked (GlcNAc...) asparagine glycans are attached at residues asparagine 117 and asparagine 391.

Belongs to the expansin family. Expansin A subfamily.

The protein localises to the secreted. Its function is as follows. May serve to lubricate the movement of the cellulose microfibrils during cell growth and wall extension and/or may serve to maintain the fluid state of the slug cell wall. The chain is Expansin-like protein DDB_G0293186 from Dictyostelium discoideum (Social amoeba).